The primary structure comprises 85 residues: SKP1-like protein 6 (85 aa).

The segment at 65-85 (MMAANYLNIQSLLDLTFSNCR) is interaction with the F-box domain of F-box proteins.

Belongs to the SKP1 family. Part of a SCF (SKP1-cullin-F-box) protein ligase complex.

It is found in the nucleus. It participates in protein modification; protein ubiquitination. In terms of biological role, involved in ubiquitination and subsequent proteasomal degradation of target proteins. Together with CUL1, RBX1 and a F-box protein, it forms a SCF E3 ubiquitin ligase complex. The functional specificity of this complex depends on the type of F-box protein. In the SCF complex, it serves as an adapter that links the F-box protein to CUL1. The protein is SKP1-like protein 6 (ASK6) of Arabidopsis thaliana (Mouse-ear cress).